A 582-amino-acid polypeptide reads, in one-letter code: 5-aminolevulinate synthase, erythroid-specific, mitochondrial (582 aa).

Succinyl-CoA is bound at residue R158. Positions 253 and 254 each coordinate pyridoxal 5'-phosphate. S275 and R294 together coordinate succinyl-CoA. Residues S327, H355, and T383 each coordinate pyridoxal 5'-phosphate. K386 is an active-site residue. K386 carries the N6-(pyridoxal phosphate)lysine modification. Pyridoxal 5'-phosphate is bound by residues T415 and T416. Residue T503 coordinates succinyl-CoA.

Belongs to the class-II pyridoxal-phosphate-dependent aminotransferase family. Homodimer. The cofactor is pyridoxal 5'-phosphate.

Its subcellular location is the mitochondrion inner membrane. The catalysed reaction is succinyl-CoA + glycine + H(+) = 5-aminolevulinate + CO2 + CoA. It participates in porphyrin-containing compound metabolism; protoporphyrin-IX biosynthesis; 5-aminolevulinate from glycine: step 1/1. Functionally, catalyzes the pyridoxal 5'-phosphate (PLP)-dependent condensation of succinyl-CoA and glycine to form aminolevulinic acid (ALA), with CoA and CO2 as by-products. Contributes significantly to heme formation during erythropoiesis. The polypeptide is 5-aminolevulinate synthase, erythroid-specific, mitochondrial (alas2) (Opsanus tau (Oyster toadfish)).